A 422-amino-acid chain; its full sequence is MNDVWDELQWRGLVAHSTDEAALQEALQTGPLTYYVGFDPTAASLHVGHLVQVLTAKRLQQAGHRPLILVGGATGLVGDPRPSAERTMNDPSVVAGWVTGLQGQIAPFLDFDGPAAATMVNNLDWTQSMSTIEFLRDVGKHFSVNRMLDREAVSKRLATTGISFTEFSYVLLQSNDYLQLHRRHGCTLQLGGSDQWGNITAGCELVRRVDQRTVHALATPLLTKADGTKFGKTESGAVWLDPELTSPYAFHQFWLNAEDAKVVDYLKAFSFRPREEIEELGRQAVENPRARAAQRALAHEVTALVHGEEAAVAVEAAAAALFGGSDLEAIDERILRGALAELPTAAPADRDVRLAQLFADTGLAPSLSGARRTIGEGGAYVNNIKLTDPEATLRDVQLLHGRYAVLRRGKKSLASVAVPLPQ.

Residue Tyr35 participates in L-tyrosine binding. Residues 40 to 49 (PTAASLHVGH) carry the 'HIGH' region motif. L-tyrosine contacts are provided by Tyr169 and Gln173. Positions 229–233 (KFGKT) match the 'KMSKS' region motif. Residue Lys232 coordinates ATP. The 67-residue stretch at 352–418 (VRLAQLFADT…GKKSLASVAV (67 aa)) folds into the S4 RNA-binding domain.

This sequence belongs to the class-I aminoacyl-tRNA synthetase family. TyrS type 1 subfamily. As to quaternary structure, homodimer.

The protein localises to the cytoplasm. It catalyses the reaction tRNA(Tyr) + L-tyrosine + ATP = L-tyrosyl-tRNA(Tyr) + AMP + diphosphate + H(+). Its function is as follows. Catalyzes the attachment of tyrosine to tRNA(Tyr) in a two-step reaction: tyrosine is first activated by ATP to form Tyr-AMP and then transferred to the acceptor end of tRNA(Tyr). In Kineococcus radiotolerans (strain ATCC BAA-149 / DSM 14245 / SRS30216), this protein is Tyrosine--tRNA ligase.